The chain runs to 567 residues: PHD finger protein 1 (567 aa).

The segment at 1–31 (MAQPPRLSRSGASSLWDPASPAPTSGPRPRL) is disordered. The region spanning 29–86 (PRLWEGQDVLARWTDGLLYLGTIKKVDSAREVCLVQFEDDSQFLVLWKDISPAALPGE) is the Tudor domain. 2 consecutive PHD-type zinc fingers follow at residues 87-142 (ELLC…CVFA) and 186-240 (QSYC…CRGG). Disordered stretches follow at residues 333 to 441 (ARMP…TDAR) and 455 to 537 (HPSA…GYLS). Residue G360 is modified to Phosphoserine. The segment covering 371 to 386 (PEPEPLRRRQKGKVEE) has biased composition (basic and acidic residues). The residue at position 420 (S420) is a Phosphoserine. 3 stretches are compositionally biased toward low complexity: residues 423-433 (PNQSYQGSSGY), 456-470 (PSASTAGTSGDSGPP), and 488-510 (SAPHSMTASSSSVSSPSPGLPRR). Over residues 524-534 (GTGGGVRGGVG) the composition is skewed to gly residues.

The protein belongs to the Polycomblike family. As to quaternary structure, interacts with CHMP1. Associated component of the PRC2 complex. Interacts with p53/TP53. In terms of tissue distribution, highest levels in heart, skeletal muscle, and pancreas, lower levels in brain, placenta, lung, liver and kidney.

It is found in the nucleus. It localises to the cytoplasm. The protein localises to the cytoskeleton. The protein resides in the microtubule organizing center. Its subcellular location is the centrosome. In terms of biological role, polycomb group (PcG) that specifically binds histone H3 trimethylated at 'Lys-36' (H3K36me3) and recruits the PRC2 complex. Involved in DNA damage response and is recruited at double-strand breaks (DSBs). Acts by binding to H3K36me3, a mark for transcriptional activation, and recruiting the PRC2 complex: it is however unclear whether recruitment of the PRC2 complex to H3K36me3 leads to enhance or inhibit H3K27me3 methylation mediated by the PRC2 complex. According to some reports, PRC2 recruitment by PHF1 promotes H3K27me3 and subsequent gene silencing by inducing spreading of PRC2 and H3K27me3 into H3K36me3 loci. According to another report, PHF1 recruits the PRC2 complex at double-strand breaks (DSBs) and inhibits the activity of PRC2. Regulates p53/TP53 stability and prolonges its turnover: may act by specifically binding to a methylated from of p53/TP53. The protein is PHD finger protein 1 (PHF1) of Homo sapiens (Human).